The following is a 330-amino-acid chain: Probable WRKY transcription factor 39 (330 aa).

The segment at residues 256 to 322 is a DNA-binding region (WRKY); it reads KIADIPPDEY…YEGEHNHSRI (67 aa).

It is found in the nucleus. Functionally, transcription factor. Interacts specifically with the W box (5'-(T)TGAC[CT]-3'), a frequently occurring elicitor-responsive cis-acting element. In Arabidopsis thaliana (Mouse-ear cress), this protein is Probable WRKY transcription factor 39 (WRKY39).